Here is a 1128-residue protein sequence, read N- to C-terminus: GTPase-activating protein BEM3 (1128 aa).

Residues 194–241 form a disordered region; it reads SSPTKIHSEQLASPAASVTYTTSRITIKSPNKGSKSPLQERLRSPQNP. The segment covering 209-230 has biased composition (polar residues); the sequence is ASVTYTTSRITIKSPNKGSKSP. S254 carries the post-translational modification Phosphoserine. Disordered regions lie at residues 345–391 and 418–486; these read EDLV…TPLS and PVLT…RPHA. Positions 366–375 are enriched in pro residues; sequence LPPPPAPPTF. Polar residues-rich tracts occupy residues 382–391 and 420–478; these read GNIKNSTPLS and LTSS…QGSL. The 108-residue stretch at 634-741 folds into the PH domain; the sequence is DNVKDGSLLL…WLSAFSDYID (108 aa). Disordered regions lie at residues 746 to 777 and 796 to 838; these read LSLS…NATI and NNNI…DSRR. Over residues 752-764 the composition is skewed to polar residues; the sequence is RNANDTDSASHLS. Residues 796–815 are compositionally biased toward low complexity; that stretch reads NNNISNSSNNIANSDGIDSN. The span at 816–829 shows a compositional bias: polar residues; the sequence is PSSHSNFLASSSGN. The 216-residue stretch at 913–1128 folds into the Rho-GAP domain; it reads LRLSSHKYQN…EKVDIHIPQV (216 aa).

The protein resides in the cytoplasm. Functionally, GTPase-activating protein (GAP) for CDC42 and less efficiently for RHO1. Negative regulator of the pheromone-response pathway through the STE20 protein kinase. The protein is GTPase-activating protein BEM3 (BEM3) of Saccharomyces cerevisiae (strain ATCC 204508 / S288c) (Baker's yeast).